Reading from the N-terminus, the 423-residue chain is Osteomodulin (423 aa).

A signal peptide spans 1–20; sequence MGFLSPIYVLFFCFGVRVYC. Tyr-22, Tyr-25, Tyr-31, Tyr-39, Tyr-51, and Tyr-77 each carry sulfotyrosine. The LRRNT domain maps to 53–91; that stretch reads VPFYNNILGCAKECFCPTNFPTSMYCDNRKLKTIPIIPM. LRR repeat units lie at residues 92-113, 116-129, 142-164, 165-184, 187-207, 213-233, 234-255, 258-279, 281-294, 301-322, and 331-353; these read HIQQ…SFIN, HLKE…KIKS, NLQQ…PKSL, ERLL…AMDG, NVTM…KEKT, KLMQ…GLPS, SLMY…YFDK, KLHA…IFNL, NLIE…KLKQ, NLEH…MICP, and HLTY…IFFC. Residues Asn-113 and Asn-121 are each glycosylated (N-linked (GlcNAc...) asparagine). N-linked (GlcNAc...) asparagine glycosylation occurs at Asn-187. Asn-242 and Asn-278 each carry an N-linked (GlcNAc...) asparagine glycan. Asn-316 carries N-linked (GlcNAc...) asparagine glycosylation. Cys-321 and Cys-353 are joined by a disulfide. Positions 381-406 are disordered; that stretch reads RSYQEEEEEDDHDSQDNTLEGQEVSD. 2 positions are modified to sulfotyrosine: Tyr-413 and Tyr-414.

It belongs to the small leucine-rich proteoglycan (SLRP) family. SLRP class II subfamily. Binds the alpha(V)beta(3)-integrin. Post-translationally, glycosylated; contains keratan sulfate. In terms of tissue distribution, bone specific.

It is found in the secreted. It localises to the extracellular space. Its subcellular location is the extracellular matrix. May be implicated in biomineralization processes. Has a function in binding of osteoblasts via the alpha(V)beta(3)-integrin. The chain is Osteomodulin (Omd) from Mus musculus (Mouse).